A 259-amino-acid chain; its full sequence is Flap endonuclease Xni (259 aa).

Asp109 contributes to the Mg(2+) binding site. In terms of domain architecture, 5'-3' exonuclease spans 165-255 (VTPAQLTDYW…FNLQDIRFNS (91 aa)). Residues Leu176, Pro185, Val187, and Ile190 each contribute to the K(+) site. The segment at 189 to 194 (GIGPKA) is interaction with DNA.

Belongs to the Xni family. It depends on Mg(2+) as a cofactor. The cofactor is K(+).

In terms of biological role, has flap endonuclease activity. During DNA replication, flap endonucleases cleave the 5'-overhanging flap structure that is generated by displacement synthesis when DNA polymerase encounters the 5'-end of a downstream Okazaki fragment. This is Flap endonuclease Xni from Vibrio cholerae serotype O1 (strain ATCC 39315 / El Tor Inaba N16961).